The primary structure comprises 177 residues: Bifunctional protein PyrR (177 aa).

The PRPP-binding signature appears at 97 to 109 (IILVDDVLYTGRT).

It belongs to the purine/pyrimidine phosphoribosyltransferase family. PyrR subfamily.

The catalysed reaction is UMP + diphosphate = 5-phospho-alpha-D-ribose 1-diphosphate + uracil. Its function is as follows. Regulates the transcription of the pyrimidine nucleotide (pyr) operon in response to exogenous pyrimidines. Functionally, also displays a weak uracil phosphoribosyltransferase activity which is not physiologically significant. The polypeptide is Bifunctional protein PyrR (Nitrosococcus oceani (strain ATCC 19707 / BCRC 17464 / JCM 30415 / NCIMB 11848 / C-107)).